The chain runs to 431 residues: Glutamate-1-semialdehyde 2,1-aminomutase (431 aa).

Position 266 is an N6-(pyridoxal phosphate)lysine (lysine 266).

The protein belongs to the class-III pyridoxal-phosphate-dependent aminotransferase family. HemL subfamily. As to quaternary structure, homodimer. Requires pyridoxal 5'-phosphate as cofactor.

It is found in the cytoplasm. The catalysed reaction is (S)-4-amino-5-oxopentanoate = 5-aminolevulinate. It functions in the pathway porphyrin-containing compound metabolism; protoporphyrin-IX biosynthesis; 5-aminolevulinate from L-glutamyl-tRNA(Glu): step 2/2. In Wolinella succinogenes (strain ATCC 29543 / DSM 1740 / CCUG 13145 / JCM 31913 / LMG 7466 / NCTC 11488 / FDC 602W) (Vibrio succinogenes), this protein is Glutamate-1-semialdehyde 2,1-aminomutase.